A 111-amino-acid polypeptide reads, in one-letter code: Guanylate cyclase activator 2B (111 aa).

The N-terminal stretch at 1-26 is a signal peptide; sequence MGSRTLLGHLSVLAVVLLLLLQGTQS. Residues 27–96 constitute a propeptide that is removed on maturation; the sequence is VDIKYQGYQV…SILQALRTMD (70 aa). Disulfide bonds link Cys67-Cys80, Cys100-Cys108, and Cys103-Cys111.

This sequence belongs to the guanylin family.

Its subcellular location is the secreted. In terms of biological role, endogenous activator of intestinal guanylate cyclase. It stimulates this enzyme through the same receptor binding region as the heat-stable enterotoxins. May be a potent physiological regulator of intestinal fluid and electrolyte transport. May be an autocrine/paracrine regulator of intestinal salt and water transport. The protein is Guanylate cyclase activator 2B (GUCA2B) of Cavia porcellus (Guinea pig).